The following is a 798-amino-acid chain: Palmitoyl thioesterase CPT1C (798 aa).

Residues 1–52 lie on the Cytoplasmic side of the membrane; the sequence is MAEAHQASSLLSSLSSDGAEVELSSPVWQEIYLCALRSWKRHLWRVWNDFLA. Residues 53–75 form a helical membrane-spanning segment; that stretch reads GVVPATPLSWLFLFSTIQLACLL. Residues 76–103 are Lumenal-facing; that stretch reads QLDPSLGLMEKIKELLPDWGGQHHQLQG. The chain crosses the membrane as a helical span at residues 104–126; that stretch reads FLSAAVFASCLWGALIFTLHVAL. Residues 127–798 are Cytoplasmic-facing; it reads RLLLSHHGWL…PNTPTSSTNL (672 aa). His469 serves as the catalytic Proton acceptor. 551–563 contacts CoA; it reads GKSFIKCCHVSSD. Residues Tyr585, Ser587, and Thr598 each contribute to the (R)-carnitine site. The interval 759-798 is required for interaction with GRIA1; that stretch reads LFRVGQHFKRQFRGENSDYRYNFLSCKTVDPNTPTSSTNL.

It belongs to the carnitine/choline acetyltransferase family. As to quaternary structure, peripherally associated with AMPAR complex. AMPAR complex consists of an inner core made of 4 pore-forming GluA/GRIA proteins (GRIA1, GRIA2, GRIA3 and GRIA4) and 4 major auxiliary subunits arranged in a twofold symmetry. One of the two pairs of distinct binding sites is occupied either by CNIH2, CNIH3 or CACNG2, CACNG3. The other harbors CACNG2, CACNG3, CACNG4, CACNG8 or GSG1L. This inner core of AMPAR complex is complemented by outer core constituents binding directly to the GluA/GRIA proteins at sites distinct from the interaction sites of the inner core constituents. Outer core constituents include at least PRRT1, PRRT2, CKAMP44/SHISA9, FRRS1L and NRN1. The proteins of the inner and outer core serve as a platform for other, more peripherally associated AMPAR constituents, including CPT1C. Alone or in combination, these auxiliary subunits control the gating and pharmacology of the AMPAR complex and profoundly impact their biogenesis and protein processing. Interacts with SACM1L; the interaction regulates SACM1L phosphatidylinositol-3-phosphatase activity and translocation to endoplasmic reticulum/trans Golgi network in a malonyl-CoA dependent manner. Interacts with ATL1. As to expression, predominantly expressed in brain (at protein level) and testis, highly expressed in the hippocampus, amygdala and cerebellum. Expressed in neurons but not astrocytes. Expressed in the ventral horn from spinal cords.

It localises to the synapse. The protein localises to the cell projection. It is found in the axon. Its subcellular location is the dendrite. The protein resides in the dendritic spine. It localises to the endoplasmic reticulum membrane. The catalysed reaction is S-hexadecanoyl-L-cysteinyl-[protein] + H2O = L-cysteinyl-[protein] + hexadecanoate + H(+). Palmitoyl thioesterase specifically expressed in the endoplasmic reticulum of neurons. Modulates the trafficking of the glutamate receptor, AMPAR, to plasma membrane through depalmitoylation of GRIA1. Also regulates AMPR trafficking through the regulation of SACM1L phosphatidylinositol-3-phosphatase activity by interaction in a malonyl-CoA dependent manner. Binds malonyl-CoA and couples malonyl-CoA to ceramide levels, necessary for proper spine maturation and contributing to systemic energy homeostasis and appetite control. Binds to palmitoyl-CoA, but does not have carnitine palmitoyltransferase 1 catalytic activity or at very low levels. The sequence is that of Palmitoyl thioesterase CPT1C (Cpt1c) from Mus musculus (Mouse).